The sequence spans 183 residues: Large ribosomal subunit protein uL6 (183 aa).

This sequence belongs to the universal ribosomal protein uL6 family. In terms of assembly, part of the 50S ribosomal subunit.

This protein binds to the 23S rRNA, and is important in its secondary structure. It is located near the subunit interface in the base of the L7/L12 stalk, and near the tRNA binding site of the peptidyltransferase center. In Chlamydia abortus (strain DSM 27085 / S26/3) (Chlamydophila abortus), this protein is Large ribosomal subunit protein uL6.